Consider the following 353-residue polypeptide: Peroxidase 34 (353 aa).

An N-terminal signal peptide occupies residues 1 to 30 (MHFSSSSTSSTWTILITLGCLMLHASLSAA). Gln-31 is subject to Pyrrolidone carboxylic acid. 4 disulfides stabilise this stretch: Cys-41-Cys-121, Cys-74-Cys-79, Cys-127-Cys-331, and Cys-207-Cys-239. N-linked (GlcNAc...) asparagine glycosylation occurs at Asn-43. Residue His-72 is the Proton acceptor of the active site. Residues Asp-73, Val-76, Gly-78, Asp-80, and Ser-82 each coordinate Ca(2+). An N-linked (GlcNAc...) asparagine glycan is attached at Asn-87. Residue Pro-169 coordinates substrate. His-200 lines the heme b pocket. Thr-201 is a binding site for Ca(2+). Asn-216, Asn-228, and Asn-244 each carry an N-linked (GlcNAc...) asparagine glycan. Ca(2+) contacts are provided by Asp-252, Thr-255, and Asp-260. A glycan (N-linked (GlcNAc...) asparagine) is linked at Asn-285.

It belongs to the peroxidase family. Classical plant (class III) peroxidase subfamily. Heme b serves as cofactor. Ca(2+) is required as a cofactor. Preferentially expressed in roots, but also detected in flowers, leaves and stems.

It localises to the secreted. The protein localises to the vacuole. The catalysed reaction is 2 a phenolic donor + H2O2 = 2 a phenolic radical donor + 2 H2O. Functionally, removal of H(2)O(2), oxidation of toxic reductants, biosynthesis and degradation of lignin, suberization, auxin catabolism, response to environmental stresses such as wounding, pathogen attack and oxidative stress. These functions might be dependent on each isozyme/isoform in each plant tissue. Its function is as follows. May be implicated in the systemic acquired resistance response via the salicylic acid signal transduction pathway. Exhibits a Ca(2+)-pectate binding affinity which could be interpreted in vivo as a specificity to interact with the pectic structure of the cell wall. The sequence is that of Peroxidase 34 (PER34) from Arabidopsis thaliana (Mouse-ear cress).